The chain runs to 220 residues: Thiopurine S-methyltransferase (220 aa).

The S-adenosyl-L-methionine site is built by W10, L45, E66, and R123.

This sequence belongs to the class I-like SAM-binding methyltransferase superfamily. TPMT family.

The protein resides in the cytoplasm. The enzyme catalyses S-adenosyl-L-methionine + a thiopurine = S-adenosyl-L-homocysteine + a thiopurine S-methylether.. The chain is Thiopurine S-methyltransferase from Nitrosomonas eutropha (strain DSM 101675 / C91 / Nm57).